A 215-amino-acid chain; its full sequence is Large ribosomal subunit protein uL4 (215 aa).

The disordered stretch occupies residues 43–97 (RRQGTHSTKTRAEVSGGGKKPWRQKGTGRARAGSTRSPIWVGGGKTHTPKPRDYS).

This sequence belongs to the universal ribosomal protein uL4 family. As to quaternary structure, part of the 50S ribosomal subunit.

In terms of biological role, one of the primary rRNA binding proteins, this protein initially binds near the 5'-end of the 23S rRNA. It is important during the early stages of 50S assembly. It makes multiple contacts with different domains of the 23S rRNA in the assembled 50S subunit and ribosome. Its function is as follows. Forms part of the polypeptide exit tunnel. This is Large ribosomal subunit protein uL4 from Brachyspira pilosicoli (Serpulina pilosicoli).